The sequence spans 126 residues: Urease subunit beta (126 aa).

The protein belongs to the urease beta subunit family. In terms of assembly, heterotrimer of UreA (gamma), UreB (beta) and UreC (alpha) subunits. Three heterotrimers associate to form the active enzyme.

The protein localises to the cytoplasm. It catalyses the reaction urea + 2 H2O + H(+) = hydrogencarbonate + 2 NH4(+). It functions in the pathway nitrogen metabolism; urea degradation; CO(2) and NH(3) from urea (urease route): step 1/1. The sequence is that of Urease subunit beta from Gloeothece citriformis (strain PCC 7424) (Cyanothece sp. (strain PCC 7424)).